Consider the following 376-residue polypeptide: tRNA-specific 2-thiouridylase MnmA (376 aa).

ATP-binding positions include G14–S21 and M40. An interaction with target base in tRNA region spans residues N100 to D102. Residue C105 is the Nucleophile of the active site. A disulfide bridge links C105 with C202. G129 serves as a coordination point for ATP. An interaction with tRNA region spans residues K152–Q154. C202 acts as the Cysteine persulfide intermediate in catalysis. The interval R315–Y316 is interaction with tRNA.

Belongs to the MnmA/TRMU family.

It localises to the cytoplasm. It carries out the reaction S-sulfanyl-L-cysteinyl-[protein] + uridine(34) in tRNA + AH2 + ATP = 2-thiouridine(34) in tRNA + L-cysteinyl-[protein] + A + AMP + diphosphate + H(+). Functionally, catalyzes the 2-thiolation of uridine at the wobble position (U34) of tRNA, leading to the formation of s(2)U34. This is tRNA-specific 2-thiouridylase MnmA from Lactococcus lactis subsp. cremoris (strain SK11).